Reading from the N-terminus, the 473-residue chain is Trehalose-6-phosphate synthase (473 aa).

Arg10 is a binding site for D-glucose 6-phosphate. A UDP-alpha-D-glucose-binding site is contributed by 21 to 22 (GG). D-glucose 6-phosphate contacts are provided by Tyr76 and Asp130. Residues Arg262 and Lys267 each contribute to the UDP-alpha-D-glucose site. Arg300 is a D-glucose 6-phosphate binding site. UDP-alpha-D-glucose-binding positions include Phe339 and 365–369 (LVAKE).

The protein belongs to the glycosyltransferase 20 family. Homotetramer.

The enzyme catalyses D-glucose 6-phosphate + UDP-alpha-D-glucose = alpha,alpha-trehalose 6-phosphate + UDP + H(+). It participates in glycan biosynthesis; trehalose biosynthesis. Probably involved in the osmoprotection via the biosynthesis of trehalose. Catalyzes the transfer of glucose from UDP-alpha-D-glucose (UDP-Glc) to D-glucose 6-phosphate (Glc-6-P) to form trehalose-6-phosphate. Acts with retention of the anomeric configuration of the UDP-sugar donor. The chain is Trehalose-6-phosphate synthase (otsA) from Salmonella arizonae (strain ATCC BAA-731 / CDC346-86 / RSK2980).